Consider the following 352-residue polypeptide: Ion-translocating oxidoreductase complex subunit D (352 aa).

5 helical membrane-spanning segments follow: residues 20-40 (IMLLVLLAAVPGIAAQLWFFG), 42-62 (GTLVQILLASVSALLAEALVL), 78-109 (ALLTGLLLAVSIPPLAPWWMVVLGTVFAVIIA), 123-143 (PAMIGYVVLLISFPVQMTSWL), and 148-168 (IAVNIPGFIDAIQVIFSGHTA). Residue Thr-187 is modified to FMN phosphoryl threonine. 5 consecutive transmembrane segments (helical) span residues 214–234 (ILAGAGWQWVNLAWLAGGVWL), 242–262 (WHIPLSFLVTLALCATLGWLF), 267–287 (LAAPQIHLLSGATMLGAFFIL), 301–321 (LIFGALAGLLVWMIRSFGGYP), and 322–342 (DGVAFAVLLANITVPLIDYYT).

This sequence belongs to the NqrB/RnfD family. As to quaternary structure, the complex is composed of six subunits: RsxA, RsxB, RsxC, RsxD, RsxE and RsxG. Requires FMN as cofactor.

Its subcellular location is the cell inner membrane. In terms of biological role, part of a membrane-bound complex that couples electron transfer with translocation of ions across the membrane. Required to maintain the reduced state of SoxR. This is Ion-translocating oxidoreductase complex subunit D from Escherichia coli O6:K15:H31 (strain 536 / UPEC).